The primary structure comprises 578 residues: Arginine--tRNA ligase (578 aa).

A 'HIGH' region motif is present at residues 127–137 (PNLAKEMHVGH).

This sequence belongs to the class-I aminoacyl-tRNA synthetase family. In terms of assembly, monomer.

It is found in the cytoplasm. It carries out the reaction tRNA(Arg) + L-arginine + ATP = L-arginyl-tRNA(Arg) + AMP + diphosphate. In Pseudomonas fluorescens (strain ATCC BAA-477 / NRRL B-23932 / Pf-5), this protein is Arginine--tRNA ligase.